Here is a 272-residue protein sequence, read N- to C-terminus: Ribosomal RNA small subunit methyltransferase A (272 aa).

The S-adenosyl-L-methionine site is built by Asn-15, Ile-17, Gly-42, Glu-64, Asp-90, and Asn-109.

Belongs to the class I-like SAM-binding methyltransferase superfamily. rRNA adenine N(6)-methyltransferase family. RsmA subfamily.

It is found in the cytoplasm. It catalyses the reaction adenosine(1518)/adenosine(1519) in 16S rRNA + 4 S-adenosyl-L-methionine = N(6)-dimethyladenosine(1518)/N(6)-dimethyladenosine(1519) in 16S rRNA + 4 S-adenosyl-L-homocysteine + 4 H(+). Functionally, specifically dimethylates two adjacent adenosines (A1518 and A1519) in the loop of a conserved hairpin near the 3'-end of 16S rRNA in the 30S particle. May play a critical role in biogenesis of 30S subunits. The protein is Ribosomal RNA small subunit methyltransferase A of Wolbachia sp. subsp. Drosophila simulans (strain wRi).